A 145-amino-acid chain; its full sequence is Acidic phospholipase A2 (145 aa).

The N-terminal stretch at 1–19 (MNPAHLLILSAVCVSLLGA) is a signal peptide. The propeptide occupies 20–27 (ANVPPQHL). Intrachain disulfides connect cysteine 38–cysteine 97, cysteine 52–cysteine 144, cysteine 54–cysteine 70, cysteine 69–cysteine 125, cysteine 76–cysteine 118, cysteine 86–cysteine 111, and cysteine 104–cysteine 116. Residues tyrosine 53, glycine 55, and glycine 57 each contribute to the Ca(2+) site. The active site involves histidine 73. Residue aspartate 74 participates in Ca(2+) binding. Residue aspartate 119 is part of the active site.

This sequence belongs to the phospholipase A2 family. Group I subfamily. D49 sub-subfamily. Ca(2+) is required as a cofactor. As to expression, expressed by the venom gland.

Its subcellular location is the secreted. The enzyme catalyses a 1,2-diacyl-sn-glycero-3-phosphocholine + H2O = a 1-acyl-sn-glycero-3-phosphocholine + a fatty acid + H(+). In terms of biological role, PLA2 catalyzes the calcium-dependent hydrolysis of the 2-acyl groups in 3-sn-phosphoglycerides. The protein is Acidic phospholipase A2 of Bungarus multicinctus (Many-banded krait).